A 564-amino-acid polypeptide reads, in one-letter code: Isocitrate dehydrogenase kinase/phosphatase (564 aa).

ATP-binding positions include 315–321 (APGVKGM) and K336. Residue D371 is part of the active site.

Belongs to the AceK family.

The protein localises to the cytoplasm. The enzyme catalyses L-seryl-[isocitrate dehydrogenase] + ATP = O-phospho-L-seryl-[isocitrate dehydrogenase] + ADP + H(+). In terms of biological role, bifunctional enzyme which can phosphorylate or dephosphorylate isocitrate dehydrogenase (IDH) on a specific serine residue. This is a regulatory mechanism which enables bacteria to bypass the Krebs cycle via the glyoxylate shunt in response to the source of carbon. When bacteria are grown on glucose, IDH is fully active and unphosphorylated, but when grown on acetate or ethanol, the activity of IDH declines drastically concomitant with its phosphorylation. The sequence is that of Isocitrate dehydrogenase kinase/phosphatase from Idiomarina loihiensis (strain ATCC BAA-735 / DSM 15497 / L2-TR).